The following is a 133-amino-acid chain: Agglutinin alpha chain (133 aa).

Residues glycine 1–leucine 133 enclose the Jacalin-type lectin domain. The stretch at residues glycine 7–tyrosine 64 is a repeat. The N-linked (GlcNAc...) asparagine; when associated with variant T-45; partial glycan is linked to asparagine 43. The igA-binding stretch occupies residues valine 68–asparagine 89. Asparagine 74 carries N-linked (GlcNAc...) asparagine; partial glycosylation. The segment at residues serine 76 to tyrosine 130 is a repeat.

This sequence belongs to the jacalin lectin family. Tetramer of four alpha chains associated with two or four beta chains.

Its function is as follows. D-galactose-specific lectin, binds the T-antigen structure Gal-beta1,3-GalNAc (Thomsen-Friedenreich-antigen-specific lectin). Potent and selective stimulant of distinct T- and B-cell functions. Shows a unique ability to specifically recognize IgA-1 from human serum. This is Agglutinin alpha chain from Artocarpus integer (Jack fruit).